We begin with the raw amino-acid sequence, 207 residues long: Ribosomal RNA large subunit methyltransferase E (207 aa).

S-adenosyl-L-methionine is bound by residues Gly-49, Trp-51, Asp-69, Asp-87, and Asp-111. Lys-151 acts as the Proton acceptor in catalysis.

Belongs to the class I-like SAM-binding methyltransferase superfamily. RNA methyltransferase RlmE family.

It localises to the cytoplasm. The enzyme catalyses uridine(2552) in 23S rRNA + S-adenosyl-L-methionine = 2'-O-methyluridine(2552) in 23S rRNA + S-adenosyl-L-homocysteine + H(+). In terms of biological role, specifically methylates the uridine in position 2552 of 23S rRNA at the 2'-O position of the ribose in the fully assembled 50S ribosomal subunit. The protein is Ribosomal RNA large subunit methyltransferase E of Oleidesulfovibrio alaskensis (strain ATCC BAA-1058 / DSM 17464 / G20) (Desulfovibrio alaskensis).